Reading from the N-terminus, the 755-residue chain is MGRTLYDKVWDDHVVDQQEDGTCLIYIDRHLVHEVTSPQAFEGLRNAGRKVRRPDCTLATVDHNIPTTPRKNFKNVSTFIQEADSRTQCETLEHNVKEFGLTYFGMDDSRQGIVHVIGPEQGFTLPGCTVNCGDSHTSTHGAFGALAFGIGTSEVEHVLATQTLLQKKSKNMRVKVDGKLAPGVTSKDIVLHIIGVIGTAGGTGCVIEFCGSAFEQMSMEARMSVCNMSIEAGARAGMIAPDETTFEYIRGRPLAPTGAEWDKAVEYWRSLRSDPDAKYDVDVFIDAADIAPTLTWGTSPQDVVAITGTTPDPSTVSDPIRRQAMERALDYIGLKPNTPMQEVKIDKVFIGSCTNSRIEDLRAAAAIAKGRHVADWVYAMVVPGSGLVKKQAEQEGLDRIFKEAGFDWREAGCSMCLGMNPDQLKPGERCASTSNRNFEGRQGAGGRTHLMSPAMAAAAAVTGYFTDVRKLTPAQQDRPASPTPKKIETELEPPVEDHAKAADQADIVTDAPATGASPPSPAPSDAAGMPKFTTLRGYAAPLDIANVDTDMIIPKQFLKTIKRTGLGTALFYNIRFDGATGEENPDFVLNQEPYRQSRILVCTGPNFGCGSSREHAPWAFNDFGIRSIIAPSFADIFFNNCFKNGMLPITLPQDKVEMLAEHAKQKAELEVDLVNQVVRYPGGEVPFDVEPFRKHCLVNGLDDIGLTMQKADLIEAFEAKRSQTWPWLDGKDYAGKATKFTPVATNTAKKQKLDW.

C353, C413, and C416 together coordinate [4Fe-4S] cluster. Disordered stretches follow at residues 427-446 (GERC…GAGG), 471-493 (LTPA…ELEP), and 510-529 (DAPA…AAGM). The span at 510 to 528 (DAPATGASPPSPAPSDAAG) shows a compositional bias: low complexity.

It belongs to the aconitase/IPM isomerase family. In terms of assembly, monomer. [4Fe-4S] cluster serves as cofactor.

The catalysed reaction is (2R,3S)-3-isopropylmalate = (2S)-2-isopropylmalate. It participates in amino-acid biosynthesis; L-leucine biosynthesis; L-leucine from 3-methyl-2-oxobutanoate: step 2/4. In terms of biological role, catalyzes the isomerization between 2-isopropylmalate and 3-isopropylmalate, via the formation of 2-isopropylmaleate. The chain is 3-isopropylmalate dehydratase (LEUA) from Rhizomucor pusillus.